Consider the following 453-residue polypeptide: MLNEPLQPQVAATSVILGLGKTGLSSARFLASRGFSIAVMDSRKSPPGLAALQEQNPDAVLRLGGFDAALIAEAEQLVVSPGVALSEPAILAARARGIPVVGDIELFASYVKAPVIGITGSNGKSTVTSLLEAMARQAGRQVLAGGNLGTPALELLEKPVPDLYILELSSFQLETTYTLDAVAACVLNISPDHMDRYPDLDAYCQAKARIYRGTGTMVINADDFRVASLVQPHRPCLRFTLGMPAVDEYGLQERAGETWLVRGHERLLSARRLPLAGRHNLANALAALALGEAVGLPRAAMLSALQAFSGLPHRCEWLAEVNGVRWYNDSKGTNVGATVAAIEGIPCQGKLILIAGGVGKGADFSPLSKPLIQRARAVVLMGQDASRLEAVLASGPPLYRVNSMDEAVVKANVLAQSGDCVLLSPACASFDMYADFEARGQAFRQAVREILSC.

120-126 contributes to the ATP binding site; it reads GSNGKST.

The protein belongs to the MurCDEF family.

The protein localises to the cytoplasm. It carries out the reaction UDP-N-acetyl-alpha-D-muramoyl-L-alanine + D-glutamate + ATP = UDP-N-acetyl-alpha-D-muramoyl-L-alanyl-D-glutamate + ADP + phosphate + H(+). The protein operates within cell wall biogenesis; peptidoglycan biosynthesis. In terms of biological role, cell wall formation. Catalyzes the addition of glutamate to the nucleotide precursor UDP-N-acetylmuramoyl-L-alanine (UMA). In Nitrosococcus oceani (strain ATCC 19707 / BCRC 17464 / JCM 30415 / NCIMB 11848 / C-107), this protein is UDP-N-acetylmuramoylalanine--D-glutamate ligase.